A 275-amino-acid chain; its full sequence is 2,3,4,5-tetrahydropyridine-2,6-dicarboxylate N-succinyltransferase (275 aa).

Substrate contacts are provided by arginine 106 and aspartate 143.

The protein belongs to the transferase hexapeptide repeat family. As to quaternary structure, homotrimer.

The protein localises to the cytoplasm. The catalysed reaction is (S)-2,3,4,5-tetrahydrodipicolinate + succinyl-CoA + H2O = (S)-2-succinylamino-6-oxoheptanedioate + CoA. Its pathway is amino-acid biosynthesis; L-lysine biosynthesis via DAP pathway; LL-2,6-diaminopimelate from (S)-tetrahydrodipicolinate (succinylase route): step 1/3. This is 2,3,4,5-tetrahydropyridine-2,6-dicarboxylate N-succinyltransferase from Rickettsia bellii (strain RML369-C).